Here is a 340-residue protein sequence, read N- to C-terminus: MISVAVNGYGTIGKRVADAILKQPDMRLVGVAKTSPNYEAFIAHRKGIKIYVPQQSIKKFEEAGIPVAGTIEDLVKASDIVVDTTPNGVGAQYKPIYQQFQRNAIFQGGEKAEVADISFSALCNYDEALGKKYIRVVSCNTTALLRTICTINKVTKVEKVRATIVRRAADQKEVKKGPINSLVPDPATVPSHHAKDVNSVIKNLDIVTMAVIAPTTLMHMHFINITLKDKVEKKDVLSVLENTPRIVLISSKYDAEATAELVEVARDLKRERNDIPEVMVFDDSVYVKDNEVMLMYAVHQESIVVPENVDAIRASTRLMSAEDSIRITNESLGILKGYLI.

NAD(+) contacts are provided by residues 11–12 (TI) and glycine 109. 138 to 140 (SCN) lines the D-glyceraldehyde 3-phosphate pocket. Cysteine 139 functions as the Nucleophile in the catalytic mechanism. Position 167 (arginine 167) interacts with NAD(+). A D-glyceraldehyde 3-phosphate-binding site is contributed by 193 to 194 (HA). Residue glutamine 300 coordinates NAD(+).

It belongs to the glyceraldehyde-3-phosphate dehydrogenase family. In terms of assembly, homotetramer.

It is found in the cytoplasm. The enzyme catalyses D-glyceraldehyde 3-phosphate + phosphate + NADP(+) = (2R)-3-phospho-glyceroyl phosphate + NADPH + H(+). It carries out the reaction D-glyceraldehyde 3-phosphate + phosphate + NAD(+) = (2R)-3-phospho-glyceroyl phosphate + NADH + H(+). Its pathway is carbohydrate degradation; glycolysis; pyruvate from D-glyceraldehyde 3-phosphate: step 1/5. The polypeptide is Glyceraldehyde-3-phosphate dehydrogenase (Saccharolobus islandicus (strain L.S.2.15 / Lassen #1) (Sulfolobus islandicus)).